Reading from the N-terminus, the 414-residue chain is Putative L-lactate dehydrogenase (414 aa).

An FMN hydroxy acid dehydrogenase domain is found at 29 to 406 (RRLGAALTIQ…SPRHVTQLRR (378 aa)). Tyr55 is an a 2-oxocarboxylate binding site. The FMN site is built by Ser137 and Gln159. Tyr161 contributes to the a 2-oxocarboxylate binding site. Thr187 serves as a coordination point for FMN. Arg196 contacts a 2-oxocarboxylate. Lys277 provides a ligand contact to FMN. Catalysis depends on His301, which acts as the Proton acceptor. Arg304 serves as a coordination point for a 2-oxocarboxylate. FMN-binding positions include 332–336 (DTGIM) and 355–356 (GR).

It belongs to the FMN-dependent alpha-hydroxy acid dehydrogenase family. The cofactor is FMN.

It catalyses the reaction (S)-lactate + A = pyruvate + AH2. This is Putative L-lactate dehydrogenase (lldD) from Mycobacterium tuberculosis (strain ATCC 25618 / H37Rv).